The primary structure comprises 125 residues: Large ribosomal subunit protein bL12 (125 aa).

It belongs to the bacterial ribosomal protein bL12 family. As to quaternary structure, homodimer. Part of the ribosomal stalk of the 50S ribosomal subunit. Forms a multimeric L10(L12)X complex, where L10 forms an elongated spine to which 2 to 4 L12 dimers bind in a sequential fashion. Binds GTP-bound translation factors.

In terms of biological role, forms part of the ribosomal stalk which helps the ribosome interact with GTP-bound translation factors. Is thus essential for accurate translation. The sequence is that of Large ribosomal subunit protein bL12 from Anaeromyxobacter sp. (strain Fw109-5).